A 76-amino-acid chain; its full sequence is uncharacterized protein (76 aa).

The protein to L.innocua lin1255, lin1742 and lin2600.

This is an uncharacterized protein from Listeria innocua serovar 6a (strain ATCC BAA-680 / CLIP 11262).